The following is a 315-amino-acid chain: Protein sprouty homolog 2 (315 aa).

The span at Met-1–Leu-15 shows a compositional bias: polar residues. Disordered regions lie at residues Met-1–His-39 and Asn-51–Phe-140. A compositionally biased stretch (basic and acidic residues) spans Asp-20 to Asp-32. Residues Ser-108–Phe-140 are compositionally biased toward low complexity. A required for interaction with CAV1 region spans residues Ser-118–Thr-315. In terms of domain architecture, SPR spans Arg-177–Cys-291. The required for interaction with TESK1 stretch occupies residues Cys-178–Thr-315.

This sequence belongs to the sprouty family. As to quaternary structure, forms heterodimers with SPRY1. Forms a tripartite complex containing GAB1, METTL13 and SPRY2. Within the complex interacts with METTL13. Interacts with RAF1. Interacts (via C-terminus) with TESK1 (via C-terminus); the interaction disrupts SPRY2 interaction with GRB2, potentially via disruption of SPRY2 serine dephosphorylation. Interacts with PPP2R1A/PP2A-A and PPP2CA/PP2A-C; the interaction with PPP2CA/PP2A-C is inhibited by interaction with TESK1, possibly by vesicular sequestration of SPRY2. Inhibition of the interaction with the serine/threonine-protein phosphatase 2A (PP2A) holoenzyme results in loss of PP2A-mediated dephosphorylation, resulting in the loss of SPRY2 interaction with GRB2. Interacts with GRB2. Interacts with CBL/C-CBL; the interaction inhibits CBL-mediated ubiquitination of EGFR. Interacts (via C-terminus) with CAV1 (via C-terminus). Cleaved at Pro-144 by the prolyl endopeptidase FAP (seprase) activity (in vitro).

The protein localises to the cytoplasm. Its subcellular location is the cytoskeleton. It localises to the cell projection. The protein resides in the ruffle membrane. Its function is as follows. Antagonist of fibroblast growth factor (FGF) pathways via inhibition of FGF-mediated phosphorylation of ERK1/2. Thereby acts as an antagonist of FGF-induced retinal lens fiber differentiation, may inhibit limb bud outgrowth and may negatively modulate respiratory organogenesis. Inhibits TGFB-induced epithelial-to-mesenchymal transition in retinal lens epithelial cells. Inhibits CBL/C-CBL-mediated EGFR ubiquitination. This Macaca fascicularis (Crab-eating macaque) protein is Protein sprouty homolog 2 (SPRY2).